Reading from the N-terminus, the 743-residue chain is Threonine synthase-like 1 (743 aa).

Lys281 bears the N6-acetyllysine mark. An N6-(pyridoxal phosphate)lysine modification is found at Lys351.

The protein belongs to the threonine synthase family. Pyridoxal 5'-phosphate is required as a cofactor.

The chain is Threonine synthase-like 1 (THNSL1) from Homo sapiens (Human).